The chain runs to 254 residues: Nickel import ATP-binding protein NikD (254 aa).

The 240-residue stretch at Pro2–Val241 folds into the ABC transporter domain. Gly36–Ser43 contributes to the ATP binding site.

This sequence belongs to the ABC transporter superfamily. Nickel importer (TC 3.A.1.5.3) family. The complex is composed of two ATP-binding proteins (NikD and NikE), two transmembrane proteins (NikB and NikC) and a solute-binding protein (NikA).

The protein localises to the cell inner membrane. It carries out the reaction Ni(2+)(out) + ATP + H2O = Ni(2+)(in) + ADP + phosphate + H(+). Functionally, part of the ABC transporter complex NikABCDE involved in nickel import. Responsible for energy coupling to the transport system. This chain is Nickel import ATP-binding protein NikD, found in Escherichia coli (strain K12).